A 249-amino-acid chain; its full sequence is PF03932 family protein CutC (249 aa).

This sequence belongs to the CutC family.

Its subcellular location is the cytoplasm. This is PF03932 family protein CutC from Bacteroides thetaiotaomicron (strain ATCC 29148 / DSM 2079 / JCM 5827 / CCUG 10774 / NCTC 10582 / VPI-5482 / E50).